The sequence spans 129 residues: Small ribosomal subunit protein uS9 (129 aa).

Residues 108-129 (RMVERKKYGKKKARKSFQFSKR) form a disordered region. Residues 114–129 (KYGKKKARKSFQFSKR) are compositionally biased toward basic residues.

This sequence belongs to the universal ribosomal protein uS9 family.

The chain is Small ribosomal subunit protein uS9 from Chlorobaculum tepidum (strain ATCC 49652 / DSM 12025 / NBRC 103806 / TLS) (Chlorobium tepidum).